Consider the following 64-residue polypeptide: Palmitoyl-CoA hydrolase (64 aa).

This sequence belongs to the type-B carboxylesterase/lipase family. As to quaternary structure, monomer and homotrimer.

The protein resides in the microsome. Its subcellular location is the endoplasmic reticulum. The enzyme catalyses hexadecanoyl-CoA + H2O = hexadecanoate + CoA + H(+). Its function is as follows. Hydrolysis of a variety of CoA thioesters of long-chain fatty acids. This Rattus norvegicus (Rat) protein is Palmitoyl-CoA hydrolase.